A 75-amino-acid polypeptide reads, in one-letter code: Small ribosomal subunit protein bS18 (75 aa).

It belongs to the bacterial ribosomal protein bS18 family. As to quaternary structure, part of the 30S ribosomal subunit. Forms a tight heterodimer with protein bS6.

Its function is as follows. Binds as a heterodimer with protein bS6 to the central domain of the 16S rRNA, where it helps stabilize the platform of the 30S subunit. This Hydrogenovibrio crunogenus (strain DSM 25203 / XCL-2) (Thiomicrospira crunogena) protein is Small ribosomal subunit protein bS18.